The following is a 523-amino-acid chain: UDP-glucuronosyltransferase 3A1 (523 aa).

The signal sequence occupies residues 1 to 22; the sequence is MAAHRSWLLVSFFLLEVLLLEA. Residues 23 to 487 are Extracellular-facing; the sequence is AKILTISTLS…QPWHEQYMLD (465 aa). Asparagine 70 is a glycosylation site (N-linked (GlcNAc...) asparagine). Residues 488–508 traverse the membrane as a helical segment; sequence VFLFLLGLTLGTLWLSVKVLV. Topologically, residues 509 to 523 are cytoplasmic; that stretch reads AVTRYLSISRKVKQA.

Belongs to the UDP-glycosyltransferase family. As to expression, highly expressed in kidney, while it is expressed at low levels in liver. Not detected in other tissues examined.

The protein localises to the membrane. It catalyses the reaction glucuronate acceptor + UDP-alpha-D-glucuronate = acceptor beta-D-glucuronoside + UDP + H(+). UDP-glucuronosyltransferases catalyze phase II biotransformation reactions in which lipophilic substrates are conjugated with glucuronic acid to increase water solubility and enhance excretion. They are of major importance in the conjugation and subsequent elimination of potentially toxic xenobiotics and endogenous compounds. The sequence is that of UDP-glucuronosyltransferase 3A1 (Ugt3a1) from Mus musculus (Mouse).